Here is a 331-residue protein sequence, read N- to C-terminus: MKISIIGGGAWGSTLAQLLTDNNHQILINEINLEYVNKINNGIHPIFNQILKDVKATVSLSETLEFSDFIVLCLPTRVMRLTLRKINKIISQPKYFINVSKGMEIENYKIIYQIVQEEITIQNIKNYACVMGPSHAEDVILRKLTLLVAASLDFSFACKVQKIFYNYNYLRVYSSNDLYGVEICSAFKNVLALISGVLDSFDFGYNFQAGFISRGLLEMAKVVDFFKGDKQTVFGLTGLGDLIVTAFNENSRNYQAGKKIGLGMEIKDIIKNSSQSIEGINNLKAFYNLSLEKKIDLPIVKEAYQMIFNYKSIKIILNNLLKRPLKLEKIF.

Positions 11 and 101 each coordinate NADPH. Sn-glycerol 3-phosphate-binding residues include Lys-101, Gly-132, and Ser-134. Ala-136 is a binding site for NADPH. Lys-188, Asp-241, Ser-251, Arg-252, and Asn-253 together coordinate sn-glycerol 3-phosphate. The active-site Proton acceptor is the Lys-188. Arg-252 lines the NADPH pocket. NADPH is bound at residue Glu-278.

It belongs to the NAD-dependent glycerol-3-phosphate dehydrogenase family.

The protein resides in the cytoplasm. It carries out the reaction sn-glycerol 3-phosphate + NAD(+) = dihydroxyacetone phosphate + NADH + H(+). It catalyses the reaction sn-glycerol 3-phosphate + NADP(+) = dihydroxyacetone phosphate + NADPH + H(+). It functions in the pathway membrane lipid metabolism; glycerophospholipid metabolism. In terms of biological role, catalyzes the reduction of the glycolytic intermediate dihydroxyacetone phosphate (DHAP) to sn-glycerol 3-phosphate (G3P), the key precursor for phospholipid synthesis. This Phytoplasma mali (strain AT) protein is Glycerol-3-phosphate dehydrogenase [NAD(P)+].